The chain runs to 145 residues: 3-dehydroquinate dehydratase (145 aa).

Y23 serves as the catalytic Proton acceptor. Substrate is bound by residues N74, H80, and D87. The Proton donor role is filled by H100. Substrate-binding positions include 101–102 and R111; that span reads IS.

The protein belongs to the type-II 3-dehydroquinase family. Homododecamer.

It carries out the reaction 3-dehydroquinate = 3-dehydroshikimate + H2O. Its pathway is metabolic intermediate biosynthesis; chorismate biosynthesis; chorismate from D-erythrose 4-phosphate and phosphoenolpyruvate: step 3/7. Catalyzes a trans-dehydration via an enolate intermediate. The sequence is that of 3-dehydroquinate dehydratase from Dictyoglomus turgidum (strain DSM 6724 / Z-1310).